Reading from the N-terminus, the 246-residue chain is Tyrosine recombinase XerD-like (246 aa).

A Core-binding (CB) domain is found at 1-72; it reads MINDINNFIE…AVNQFLFFLY (72 aa). The Tyr recombinase domain maps to 84–246; the sequence is QETEKITLTQ…TPITLERYYR (163 aa). Residues Lys149 and Arg212 contribute to the active site. The active-site O-(3'-phospho-DNA)-tyrosine intermediate is Tyr244.

This sequence belongs to the 'phage' integrase family. XerD-like subfamily.

The protein resides in the cytoplasm. Putative tyrosine recombinase. Not involved in the cutting and rejoining of the recombining DNA molecules on dif(SL) site. This Streptococcus agalactiae serotype III (strain NEM316) protein is Tyrosine recombinase XerD-like.